Consider the following 245-residue polypeptide: Ureidoacrylate amidohydrolase RutB (245 aa).

D41 acts as the Proton acceptor in catalysis. K150 is a catalytic residue. Catalysis depends on C183, which acts as the Nucleophile.

It belongs to the isochorismatase family. RutB subfamily.

The catalysed reaction is (Z)-3-ureidoacrylate + H2O + H(+) = (Z)-3-aminoacrylate + NH4(+) + CO2. It catalyses the reaction (Z)-3-ureidoacrylate + H2O = (Z)-3-aminoacrylate + carbamate + H(+). It carries out the reaction (Z)-2-methylureidoacrylate + H2O + H(+) = (Z)-2-methylaminoacrylate + NH4(+) + CO2. In terms of biological role, hydrolyzes ureidoacrylate to form aminoacrylate and carbamate. The carbamate hydrolyzes spontaneously, thereby releasing one of the nitrogen atoms of the pyrimidine ring as ammonia and one of its carbon atoms as CO2. This chain is Ureidoacrylate amidohydrolase RutB, found in Pseudomonas syringae pv. syringae (strain B728a).